The primary structure comprises 256 residues: Floral homeotic protein APETALA 1 (256 aa).

The MADS-box domain occupies 1-61 (MGRGRVQLKR…GKLFEYSTDS (61 aa)). The K-box domain occupies 88–178 (NTNWSMEYNR…SKQIKEREKI (91 aa)). Residues 88 to 185 (NTNWSMEYNR…EKILRAQQEQ (98 aa)) are a coiled coil.

In terms of assembly, homodimer capable of binding to CArG-box sequences. Heterodimer with SEP3, AP1 and SVP. Binds AP3/PI to form a ternary complex. Interacts with the SEU-LUG corepressor complex when complexed to AGL24 or SVP. Interacts with AGL15 and AGL16. Interacts with TT16/AGL32. As to expression, expressed in young flower primordia, later becomes localized to sepals and petals.

It localises to the nucleus. Transcription factor that promotes early floral meristem identity in synergy with LEAFY. Is required subsequently for the transition of an inflorescence meristem into a floral meristem. Is indispensable for normal development of sepals and petals in flowers. Positively regulates the B class homeotic proteins APETALA3 and PISTILLATA with the cooperation of LEAFY and UFO. Interacts with SEPALLATA3 or AP3/PI heterodimer to form complexes that could be involved in genes regulation during floral meristem development. Positively regulates AGAMOUS in cooperation with LEAFY. Displays a redundant function with CAULIFLOWER in the up-regulation of LEAFY. Together with AGL24 and SVP, controls the identity of the floral meristem and regulates expression of class B, C and E genes. Represses flowering time genes AGL24, SVP and SOC1 in emerging floral meristems. This chain is Floral homeotic protein APETALA 1 (AP1), found in Arabidopsis thaliana (Mouse-ear cress).